Reading from the N-terminus, the 241-residue chain is Octanoyltransferase (241 aa).

One can recognise a BPL/LPL catalytic domain in the interval 38-227; it reads AGGPDTLLLL…AVCNALDGAL (190 aa). Substrate is bound by residues 85–92, 157–159, and 170–172; these read RGGKITWH, AIG, and GFA. Catalysis depends on cysteine 188, which acts as the Acyl-thioester intermediate.

Belongs to the LipB family.

Its subcellular location is the cytoplasm. It carries out the reaction octanoyl-[ACP] + L-lysyl-[protein] = N(6)-octanoyl-L-lysyl-[protein] + holo-[ACP] + H(+). The protein operates within protein modification; protein lipoylation via endogenous pathway; protein N(6)-(lipoyl)lysine from octanoyl-[acyl-carrier-protein]: step 1/2. Functionally, catalyzes the transfer of endogenously produced octanoic acid from octanoyl-acyl-carrier-protein onto the lipoyl domains of lipoate-dependent enzymes. Lipoyl-ACP can also act as a substrate although octanoyl-ACP is likely to be the physiological substrate. The polypeptide is Octanoyltransferase (Mycobacterium marinum (strain ATCC BAA-535 / M)).